A 556-amino-acid polypeptide reads, in one-letter code: 2-succinyl-5-enolpyruvyl-6-hydroxy-3-cyclohexene-1-carboxylate synthase (556 aa).

Belongs to the TPP enzyme family. MenD subfamily. Homodimer. The cofactor is Mg(2+). Mn(2+) serves as cofactor. Requires thiamine diphosphate as cofactor.

It carries out the reaction isochorismate + 2-oxoglutarate + H(+) = 5-enolpyruvoyl-6-hydroxy-2-succinyl-cyclohex-3-ene-1-carboxylate + CO2. Its pathway is quinol/quinone metabolism; 1,4-dihydroxy-2-naphthoate biosynthesis; 1,4-dihydroxy-2-naphthoate from chorismate: step 2/7. It participates in quinol/quinone metabolism; menaquinone biosynthesis. Functionally, catalyzes the thiamine diphosphate-dependent decarboxylation of 2-oxoglutarate and the subsequent addition of the resulting succinic semialdehyde-thiamine pyrophosphate anion to isochorismate to yield 2-succinyl-5-enolpyruvyl-6-hydroxy-3-cyclohexene-1-carboxylate (SEPHCHC). The polypeptide is 2-succinyl-5-enolpyruvyl-6-hydroxy-3-cyclohexene-1-carboxylate synthase (Staphylococcus epidermidis (strain ATCC 35984 / DSM 28319 / BCRC 17069 / CCUG 31568 / BM 3577 / RP62A)).